Reading from the N-terminus, the 330-residue chain is Inactive hydroxysteroid dehydrogenase-like protein 1 (330 aa).

Residue A2 is modified to N-acetylalanine. Positions 2-82 are required for mitochondria translocation; that stretch reads AAVDSFYLLY…SGATDGIGKA (81 aa). NADP(+) contacts are provided by residues 74 to 80, D125, and K222; that span reads GATDGIG.

Belongs to the short-chain dehydrogenases/reductases (SDR) family. 17-beta-HSD 3 subfamily. In terms of assembly, interacts with STYXL1.

The protein localises to the mitochondrion. The sequence is that of Inactive hydroxysteroid dehydrogenase-like protein 1 (Hsdl1) from Mus musculus (Mouse).